The chain runs to 786 residues: Signal transducer and activator of transcription 5B (786 aa).

The residue at position 90 (Tyr90) is a Phosphotyrosine. Ser128 is modified (phosphoserine). Residues 589 to 686 enclose the SH2 domain; that stretch reads WNDGAILGFV…EVYSKYYTPV (98 aa). A phosphotyrosine mark is found at Tyr682 and Tyr699.

Belongs to the transcription factor STAT family. As to quaternary structure, upon activation, forms a homodimer or a heterodimer with a related family member. Binds NR3C1. Interacts with NCOA1. Interacts with SOCS7. Interacts (via SH2 domain) with INSR. Interacts with CPEB3; this inhibits STAT5B-mediated transcriptional activation. In terms of processing, tyrosine phosphorylated in response to signaling via activated KIT, resulting in translocation to the nucleus. Tyrosine phosphorylated in response to signaling via activated FLT3; wild-type FLT3 results in much weaker phosphorylation than constitutively activated mutant FLT3. Alternatively, can be phosphorylated by JAK2. Phosphorylation at Tyr-699 by PTK6 or HCK leads to an increase of its transcriptional activity. In terms of tissue distribution, in the virgin, found in most tissues. Particularly abundant in muscle tissue of virgin and lactating females, and of males.

The protein resides in the cytoplasm. The protein localises to the nucleus. Its function is as follows. Carries out a dual function: signal transduction and activation of transcription. Mediates cellular responses to the cytokine KITLG/SCF and other growth factors. Binds to the GAS element and activates PRL-induced transcription. Positively regulates hematopoietic/erythroid differentiation. The protein is Signal transducer and activator of transcription 5B (Stat5b) of Mus musculus (Mouse).